Here is a 230-residue protein sequence, read N- to C-terminus: Transcriptional regulatory protein CitT (230 aa).

In terms of domain architecture, Response regulatory spans 6–124; it reads KVLIIEDDFR…VLHQRLDAYV (119 aa). Position 59 is a 4-aspartylphosphate (Asp-59). Residues 184–203 constitute a DNA-binding region (H-T-H motif); sequence AMEGARLIGASRSTVRRYFE.

In terms of processing, phosphorylated by CitS.

It is found in the cytoplasm. In terms of biological role, member of the two-component regulatory system CitT/CitS. The polypeptide is Transcriptional regulatory protein CitT (citT) (Halalkalibacterium halodurans (strain ATCC BAA-125 / DSM 18197 / FERM 7344 / JCM 9153 / C-125) (Bacillus halodurans)).